A 208-amino-acid chain; its full sequence is Methenyltetrahydrofolate cyclohydrolase (208 aa).

The helical transmembrane segment at 25 to 46 (GAAAISGAMGAALVSMVCNLTI) threads the bilayer.

Belongs to the cyclodeaminase/cyclohydrolase family. As to quaternary structure, homodimer.

Its subcellular location is the membrane. The catalysed reaction is (6R)-5,10-methenyltetrahydrofolate + H2O = (6R)-10-formyltetrahydrofolate + H(+). It functions in the pathway one-carbon metabolism; formaldehyde assimilation via serine pathway. Required for both C1 and C2 metabolism. In Methylorubrum extorquens (strain ATCC 14718 / DSM 1338 / JCM 2805 / NCIMB 9133 / AM1) (Methylobacterium extorquens), this protein is Methenyltetrahydrofolate cyclohydrolase (fchA).